The following is a 101-amino-acid chain: MAKKSKIAKNEQRKEVVARFAERRNELKAIIKNPNTSDEDRLDAQFELNRQPRDASPVRVRNRDSRDGRPRGFLRKFGVSRVRMREMAHRGELPGVRKSSW.

Residues 46 to 72 form a disordered region; it reads FELNRQPRDASPVRVRNRDSRDGRPRG. Residues 61–70 are compositionally biased toward basic and acidic residues; sequence RNRDSRDGRP.

It belongs to the universal ribosomal protein uS14 family. As to quaternary structure, part of the 30S ribosomal subunit. Contacts proteins S3 and S10.

Binds 16S rRNA, required for the assembly of 30S particles and may also be responsible for determining the conformation of the 16S rRNA at the A site. The protein is Small ribosomal subunit protein uS14 of Corynebacterium diphtheriae (strain ATCC 700971 / NCTC 13129 / Biotype gravis).